The chain runs to 441 residues: tRNA modification GTPase MnmE (441 aa).

3 residues coordinate (6S)-5-formyl-5,6,7,8-tetrahydrofolate: arginine 23, glutamate 81, and lysine 121. Residues 218-363 form the TrmE-type G domain; sequence GFRVAIVGPP…LESWIAAFVS (146 aa). Position 228 (asparagine 228) interacts with K(+). Residues 228–233, 247–253, 272–275, and 326–329 each bind GTP; these read NAGKSS, TDIAGTT, DTAG, and NKAD. Residue serine 232 participates in Mg(2+) binding. Residues threonine 247, isoleucine 249, and threonine 252 each coordinate K(+). Threonine 253 serves as a coordination point for Mg(2+). Lysine 441 is a (6S)-5-formyl-5,6,7,8-tetrahydrofolate binding site.

This sequence belongs to the TRAFAC class TrmE-Era-EngA-EngB-Septin-like GTPase superfamily. TrmE GTPase family. In terms of assembly, homodimer. Heterotetramer of two MnmE and two MnmG subunits. The cofactor is K(+).

The protein localises to the cytoplasm. Its function is as follows. Exhibits a very high intrinsic GTPase hydrolysis rate. Involved in the addition of a carboxymethylaminomethyl (cmnm) group at the wobble position (U34) of certain tRNAs, forming tRNA-cmnm(5)s(2)U34. The protein is tRNA modification GTPase MnmE of Hyphomonas neptunium (strain ATCC 15444).